We begin with the raw amino-acid sequence, 88 residues long: Small ribosomal subunit protein uS17 (88 aa).

Belongs to the universal ribosomal protein uS17 family. In terms of assembly, part of the 30S ribosomal subunit.

In terms of biological role, one of the primary rRNA binding proteins, it binds specifically to the 5'-end of 16S ribosomal RNA. This chain is Small ribosomal subunit protein uS17, found in Marinobacter nauticus (strain ATCC 700491 / DSM 11845 / VT8) (Marinobacter aquaeolei).